The sequence spans 395 residues: Chaperone protein DnaJ (395 aa).

The 66-residue stretch at 4–69 (DYYEVLGVGR…DKRRRYDQFG (66 aa)) folds into the J domain. The segment at 152-233 (GVEKTLKIKK…CHGEGIKQGE (82 aa)) adopts a CR-type zinc-finger fold. 8 residues coordinate Zn(2+): Cys-165, Cys-168, Cys-181, Cys-184, Cys-207, Cys-210, Cys-221, and Cys-224. 4 CXXCXGXG motif repeats span residues 165–172 (CDVCNGTG), 181–188 (CPTCQGTG), 207–214 (CPTCGGEG), and 221–228 (CTACHGEG).

The protein belongs to the DnaJ family. Homodimer. Zn(2+) is required as a cofactor.

It localises to the cytoplasm. In terms of biological role, participates actively in the response to hyperosmotic and heat shock by preventing the aggregation of stress-denatured proteins and by disaggregating proteins, also in an autonomous, DnaK-independent fashion. Unfolded proteins bind initially to DnaJ; upon interaction with the DnaJ-bound protein, DnaK hydrolyzes its bound ATP, resulting in the formation of a stable complex. GrpE releases ADP from DnaK; ATP binding to DnaK triggers the release of the substrate protein, thus completing the reaction cycle. Several rounds of ATP-dependent interactions between DnaJ, DnaK and GrpE are required for fully efficient folding. Also involved, together with DnaK and GrpE, in the DNA replication of plasmids through activation of initiation proteins. The chain is Chaperone protein DnaJ from Prosthecochloris aestuarii (strain DSM 271 / SK 413).